A 518-amino-acid chain; its full sequence is E3 ubiquitin-protein ligase TRIM39 (518 aa).

Residues 29–70 (CSVCLEYLKEPVIIECGHNFCKACITRWWEDLERDFPCPVCR) form an RING-type zinc finger. A B box-type zinc finger spans residues 102–143 (RDESLCPQHHEALSLFCYEDQEAVCLICAISHTHRAHTVVPL). Zn(2+) is bound by residues Cys-107, His-110, Cys-129, and His-135. Residues 181–250 (ELKRLVESRR…AHLAAEVEGK (70 aa)) are a coiled coil. 2 interaction with CDKN1A regions span residues 268–337 (KNIP…QLIA) and 389–518 (TSGR…TDWE). The B30.2/SPRY domain occupies 319–514 (SNFPRQYFAL…NAAPLTIRPP (196 aa)).

This sequence belongs to the TRIM/RBCC family. As to quaternary structure, interacts with MOAP1. Interacts with CDKN1A. Autoubiquitinated.

It is found in the cytoplasm. It localises to the cytosol. Its subcellular location is the mitochondrion. The protein localises to the nucleus. It carries out the reaction S-ubiquitinyl-[E2 ubiquitin-conjugating enzyme]-L-cysteine + [acceptor protein]-L-lysine = [E2 ubiquitin-conjugating enzyme]-L-cysteine + N(6)-ubiquitinyl-[acceptor protein]-L-lysine.. The protein operates within protein modification; protein ubiquitination. In terms of biological role, E3 ubiquitin-protein ligase. May facilitate apoptosis by inhibiting APC/C-Cdh1-mediated poly-ubiquitination and subsequent proteasome-mediated degradation of the pro-apoptotic protein MOAP1. Regulates the G1/S transition of the cell cycle and DNA damage-induced G2 arrest by stabilizing CDKN1A/p21. Positively regulates CDKN1A/p21 stability by competing with DTL for CDKN1A/p21 binding, therefore disrupting DCX(DTL) E3 ubiquitin ligase complex-mediated CDKN1A/p21 ubiquitination and degradation. This chain is E3 ubiquitin-protein ligase TRIM39 (TRIM39), found in Pan troglodytes (Chimpanzee).